Here is an 808-residue protein sequence, read N- to C-terminus: Probable inorganic carbon transporter subunit DabA (808 aa).

Positions 335, 337, 497, and 512 each coordinate Zn(2+).

This sequence belongs to the inorganic carbon transporter (TC 9.A.2) DabA family. As to quaternary structure, forms a complex with DabB. Requires Zn(2+) as cofactor.

Its subcellular location is the cell inner membrane. Part of an energy-coupled inorganic carbon pump. The polypeptide is Probable inorganic carbon transporter subunit DabA (Rhodopseudomonas palustris (strain ATCC BAA-98 / CGA009)).